The sequence spans 401 residues: Acetate kinase (401 aa).

Asn10 serves as a coordination point for Mg(2+). Lys17 contacts ATP. Arg91 is a binding site for substrate. The active-site Proton donor/acceptor is the Asp150. Residues 210 to 214 (HLGNG), 285 to 287 (DCR), and 333 to 337 (GIGEN) each bind ATP. Glu387 contributes to the Mg(2+) binding site.

The protein belongs to the acetokinase family. As to quaternary structure, homodimer. Mg(2+) serves as cofactor. It depends on Mn(2+) as a cofactor.

The protein resides in the cytoplasm. The catalysed reaction is acetate + ATP = acetyl phosphate + ADP. Its pathway is metabolic intermediate biosynthesis; acetyl-CoA biosynthesis; acetyl-CoA from acetate: step 1/2. Its function is as follows. Catalyzes the formation of acetyl phosphate from acetate and ATP. Can also catalyze the reverse reaction. The polypeptide is Acetate kinase (Pasteurella multocida (strain Pm70)).